The sequence spans 350 residues: Nicotinate-nucleotide--dimethylbenzimidazole phosphoribosyltransferase (350 aa).

Residue glutamate 317 is the Proton acceptor of the active site.

It belongs to the CobT family.

The catalysed reaction is 5,6-dimethylbenzimidazole + nicotinate beta-D-ribonucleotide = alpha-ribazole 5'-phosphate + nicotinate + H(+). It functions in the pathway nucleoside biosynthesis; alpha-ribazole biosynthesis; alpha-ribazole from 5,6-dimethylbenzimidazole: step 1/2. Its function is as follows. Catalyzes the synthesis of alpha-ribazole-5'-phosphate from nicotinate mononucleotide (NAMN) and 5,6-dimethylbenzimidazole (DMB). This chain is Nicotinate-nucleotide--dimethylbenzimidazole phosphoribosyltransferase, found in Shewanella oneidensis (strain ATCC 700550 / JCM 31522 / CIP 106686 / LMG 19005 / NCIMB 14063 / MR-1).